Here is a 453-residue protein sequence, read N- to C-terminus: Homogentisate 1,2-dioxygenase (453 aa).

Positions 1 to 42 (MLEKAEKQRRAGSGQQRAAGYMPGFGNDFETESLPGALPQGQ) are disordered. The Proton acceptor role is filled by H306. Positions 349 and 355 each coordinate Fe cation. Y364 and H385 together coordinate homogentisate. A Fe cation-binding site is contributed by H385.

This sequence belongs to the homogentisate dioxygenase family. As to quaternary structure, hexamer; dimer of trimers. The cofactor is Fe cation.

The enzyme catalyses homogentisate + O2 = 4-maleylacetoacetate + H(+). It participates in amino-acid degradation; L-phenylalanine degradation; acetoacetate and fumarate from L-phenylalanine: step 4/6. Its function is as follows. Involved in the catabolism of homogentisate (2,5-dihydroxyphenylacetate or 2,5-OH-PhAc), a central intermediate in the degradation of phenylalanine and tyrosine. Catalyzes the oxidative ring cleavage of the aromatic ring of homogentisate to yield maleylacetoacetate. The sequence is that of Homogentisate 1,2-dioxygenase from Rhizobium meliloti (strain 1021) (Ensifer meliloti).